The primary structure comprises 85 residues: UPF0181 protein YPO1774/y2534/YP_1619 (85 aa).

The disordered stretch occupies residues 50 to 85; the sequence is QAMAIFEDHDFDEHTESDYRRDDEPDADDIEDPYEG. Positions 55-72 are enriched in basic and acidic residues; it reads FEDHDFDEHTESDYRRDD. Residues 73 to 85 are compositionally biased toward acidic residues; it reads EPDADDIEDPYEG.

The protein belongs to the UPF0181 family.

In Yersinia pestis, this protein is UPF0181 protein YPO1774/y2534/YP_1619.